Consider the following 229-residue polypeptide: Type-5 uracil-DNA glycosylase (229 aa).

Positions 19, 22, 123, and 138 each coordinate [4Fe-4S] cluster.

The protein belongs to the uracil-DNA glycosylase (UDG) superfamily. Type 5 (UDGb) family.

DNA glycosylase with broad substrate specificity. The sequence is that of Type-5 uracil-DNA glycosylase from Mycobacterium leprae (strain TN).